Consider the following 366-residue polypeptide: Chorismate synthase (366 aa).

Positions 48 and 54 each coordinate NADP(+). Residues 125–127 (RSS), 238–239 (NA), glycine 278, 293–297 (KPTSS), and arginine 319 each bind FMN.

The protein belongs to the chorismate synthase family. As to quaternary structure, homotetramer. The cofactor is FMNH2.

It catalyses the reaction 5-O-(1-carboxyvinyl)-3-phosphoshikimate = chorismate + phosphate. It participates in metabolic intermediate biosynthesis; chorismate biosynthesis; chorismate from D-erythrose 4-phosphate and phosphoenolpyruvate: step 7/7. In terms of biological role, catalyzes the anti-1,4-elimination of the C-3 phosphate and the C-6 proR hydrogen from 5-enolpyruvylshikimate-3-phosphate (EPSP) to yield chorismate, which is the branch point compound that serves as the starting substrate for the three terminal pathways of aromatic amino acid biosynthesis. This reaction introduces a second double bond into the aromatic ring system. This Burkholderia cenocepacia (strain HI2424) protein is Chorismate synthase.